The following is a 252-amino-acid chain: Hydroxyacylglutathione hydrolase (252 aa).

Zn(2+) is bound by residues His-54, His-56, Asp-58, His-59, His-111, Asp-128, and His-166.

Belongs to the metallo-beta-lactamase superfamily. Glyoxalase II family. As to quaternary structure, monomer. The cofactor is Zn(2+).

The enzyme catalyses an S-(2-hydroxyacyl)glutathione + H2O = a 2-hydroxy carboxylate + glutathione + H(+). Its pathway is secondary metabolite metabolism; methylglyoxal degradation; (R)-lactate from methylglyoxal: step 2/2. Functionally, thiolesterase that catalyzes the hydrolysis of S-D-lactoyl-glutathione to form glutathione and D-lactic acid. This Photobacterium profundum (strain SS9) protein is Hydroxyacylglutathione hydrolase.